The following is a 125-amino-acid chain: Thioredoxin H-type (125 aa).

Positions 2 to 112 (AEGNVFACHS…LERKVAALAA (111 aa)) constitute a Thioredoxin domain. Residues C38 and C41 each act as nucleophile in the active site. Residues C38 and C41 are joined by a disulfide bond.

The protein belongs to the thioredoxin family. Plant H-type subfamily.

The protein resides in the cytoplasm. Its function is as follows. Participates in various redox reactions through the reversible oxidation of the active center dithiol to a disulfide. The H form is known to activate a number of cytosolic enzymes. The polypeptide is Thioredoxin H-type (SB09) (Picea mariana (Black spruce)).